Consider the following 161-residue polypeptide: Large ribosomal subunit protein uL30m (161 aa).

Residues 1 to 34 (MAGILRLVVQWPPGRLQTVTKGVESLICTDWIRH) constitute a mitochondrion transit peptide.

It belongs to the universal ribosomal protein uL30 family. Component of the mitochondrial large ribosomal subunit (mt-LSU). Mature mammalian 55S mitochondrial ribosomes consist of a small (28S) and a large (39S) subunit. The 28S small subunit contains a 12S ribosomal RNA (12S mt-rRNA) and 30 different proteins. The 39S large subunit contains a 16S rRNA (16S mt-rRNA), a copy of mitochondrial valine transfer RNA (mt-tRNA(Val)), which plays an integral structural role, and 52 different proteins.

It localises to the mitochondrion. The polypeptide is Large ribosomal subunit protein uL30m (MRPL30) (Homo sapiens (Human)).